The chain runs to 525 residues: GMP synthase [glutamine-hydrolyzing] (525 aa).

In terms of domain architecture, Glutamine amidotransferase type-1 spans 9–207 (RILILDFGSQ…VMDICKCEKL (199 aa)). The active-site Nucleophile is Cys-86. Residues His-181 and Glu-183 contribute to the active site. Residues 208–400 (WTAGAIIEDA…LGLPYDMLYR (193 aa)) form the GMPS ATP-PPase domain. Position 235 to 241 (235 to 241 (SGGVDSS)) interacts with ATP.

As to quaternary structure, homodimer.

It carries out the reaction XMP + L-glutamine + ATP + H2O = GMP + L-glutamate + AMP + diphosphate + 2 H(+). It participates in purine metabolism; GMP biosynthesis; GMP from XMP (L-Gln route): step 1/1. Its function is as follows. Catalyzes the synthesis of GMP from XMP. The polypeptide is GMP synthase [glutamine-hydrolyzing] (Alteromonas mediterranea (strain DSM 17117 / CIP 110805 / LMG 28347 / Deep ecotype)).